The following is a 131-amino-acid chain: Protein TAP2 (131 aa).

The signal sequence occupies residues 1-22; that stretch reads MAKSSPTYTVLFLLGLLALSTA. The tract at residues 75-101 is disordered; sequence ARSGGETDVKKMEGSMPDQGKTAGRDQ.

As to expression, tapetum of anthers.

This chain is Protein TAP2 (TAP2), found in Antirrhinum majus (Garden snapdragon).